Consider the following 217-residue polypeptide: External core antigen (217 aa).

The signal sequence occupies residues methionine 1 to glutamine 19. The segment at glycine 26–leucine 28 is HBEAG. A disordered region spans residues arginine 180–cysteine 217. Positions arginine 188 to serine 210 are enriched in basic residues. A 1; half-length repeat occupies serine 189–proline 195. Residues serine 189–glutamine 211 form a 3 X 8 AA repeats of S-P-R-R-R-R-S-Q region. Residues serine 189–cysteine 217 constitute a propeptide that is removed on maturation. Repeat copies occupy residues serine 196–glutamine 203 and serine 204–glutamine 211.

Belongs to the orthohepadnavirus precore antigen family. Homodimerizes. Post-translationally, phosphorylated. In terms of processing, cleaved by host furin.

It is found in the secreted. The protein localises to the host nucleus. Functionally, may regulate immune response to the intracellular capsid in acting as a T-cell tolerogen, by having an immunoregulatory effect which prevents destruction of infected cells by cytotoxic T-cells. This immune regulation may predispose to chronicity during perinatal infections and prevent severe liver injury during adult infections. The chain is External core antigen from Marmota monax (Woodchuck).